The chain runs to 793 residues: E3 UFM1-protein ligase 1 (793 aa).

Alanine 2 is modified (N-acetylalanine). The tract at residues alanine 2–proline 200 is mediates interaction with DDRGK1. The interval alanine 2–phenylalanine 212 is required for E3 UFM1-protein ligase activity. The involved in CDK5RAP3-binding stretch occupies residues aspartate 121–serine 250. A mediates interaction with TRIP4 region spans residues proline 200 to aspartate 400. Residues leucine 407–glutamate 473 form a disordered region. Arginine 433 bears the Omega-N-methylarginine mark. Residue serine 458 is modified to Phosphoserine. Residues isoleucine 490–leucine 684 form a mediates interaction with CDK5RAP3 region. A Phosphothreonine modification is found at threonine 536.

Belongs to the UFL1 family. In terms of assembly, catalytic component of the UFM1 ribosome E3 ligase (UREL) complex, composed of UFL1, DDRGK1 and CDK5RAP3. Interacts with E2-like enzyme UFC1. Interacts with RELA. Interacts with NBN; promoting recruitment to double-strand breaks following DNA damage. Interacts (when phosphorylated) with YWHAG/14-3-3-gamma; sequestering UFL1 and preventing its association with PDCD1/PD-1 substrate. Ubiquitinated, leading to its degradation by the proteasome. Interaction with CDK5RAP3 protects both proteins against ubiquitination and degradation via the proteasome. In terms of processing, phosphorylation at Thr-536 by AMPK promotes its interaction with YWHAG/14-3-3-gamma, thereby preventing UFL1 association with PDCD1/PD-1 substrate.

The protein localises to the endoplasmic reticulum membrane. The protein resides in the cytoplasm. It is found in the cytosol. It localises to the nucleus. Its subcellular location is the chromosome. Functionally, E3 protein ligase that mediates ufmylation, the covalent attachment of the ubiquitin-like modifier UFM1 to lysine residues on target proteins, and which plays a key role in various processes, such as ribosome recycling, response to DNA damage, interferon response or reticulophagy (also called ER-phagy). Catalyzes ufmylation of many protein, such as CD274/PD-L1, CDK5RAP3, CYB5R3, DDRGK1, EIF6, histone H4, MRE11, P4HB, PDCD1/PD-1, TRIP4, RPN1, RPS20/uS10, RPL10/uL16, RPL26/uL24, SYVN1/HRD1 and TP53/p53. As part of the UREL complex, plays a key role in ribosome recycling by catalyzing mono-ufmylation of RPL26/uL24 subunit of the 60S ribosome. Ufmylation of RPL26/uL24 occurs on free 60S ribosomes following ribosome dissociation: it weakens the junction between post-termination 60S subunits and SEC61 translocons, promoting release and recycling of the large ribosomal subunit from the endoplasmic reticulum membrane. Ufmylation of RPL26/uL24 and subsequent 60S ribosome recycling either take place after normal termination of translation or after ribosome stalling during cotranslational translocation at the endoplasmic reticulum. Involved in reticulophagy in response to endoplasmic reticulum stress by mediating ufmylation of proteins such as CYB5R3 and RPN1, thereby promoting lysosomal degradation of ufmylated proteins. Ufmylation in response to endoplasmic reticulum stress is essential for processes such as hematopoiesis, blood vessel morphogenesis or inflammatory response. Mediates ufmylation of DDRGK1 and CDK5RAP3; the role of these modifications is however unclear: as both DDRGK1 and CDK5RAP3 act as substrate adapters for ufmylation, it is uncertain whether ufmylation of these proteins is, a collateral effect or is required for ufmylation. Acts as a negative regulator of T-cell activation by mediating ufmylation and stabilization of PDCD1/PD-1. Also involved in the response to DNA damage: recruited to double-strand break sites following DNA damage and mediates monoufmylation of histone H4 and ufmylation of MRE11. Mediates ufmylation of TP53/p53, promoting its stability. Catalyzes ufmylation of TRIP4, thereby playing a role in nuclear receptor-mediated transcription. Required for hematopoietic stem cell function and hematopoiesis. This is E3 UFM1-protein ligase 1 from Macaca fascicularis (Crab-eating macaque).